Reading from the N-terminus, the 219-residue chain is Elongation factor Ts (219 aa).

Positions 82–85 (TDFV) are involved in Mg(2+) ion dislocation from EF-Tu.

Belongs to the EF-Ts family.

It localises to the cytoplasm. In terms of biological role, associates with the EF-Tu.GDP complex and induces the exchange of GDP to GTP. It remains bound to the aminoacyl-tRNA.EF-Tu.GTP complex up to the GTP hydrolysis stage on the ribosome. This is Elongation factor Ts from Gloeobacter violaceus (strain ATCC 29082 / PCC 7421).